A 336-amino-acid polypeptide reads, in one-letter code: Type II methyltransferase M.PvuII (336 aa).

A run of 2 repeats spans residues S11 to F113 and S181 to F293. Residues T196–G215 are disordered. Over residues S202 to S211 the composition is skewed to basic and acidic residues.

Belongs to the N(4)/N(6)-methyltransferase family. N(4) subfamily. Monomer.

The catalysed reaction is a 2'-deoxycytidine in DNA + S-adenosyl-L-methionine = an N(4)-methyl-2'-deoxycytidine in DNA + S-adenosyl-L-homocysteine + H(+). In terms of biological role, a beta subtype methylase, recognizes the double-stranded sequence 5'-CAGCTG-3', methylates C-4 on both strands, and protects the DNA from cleavage by the PvuII endonuclease. The protein is Type II methyltransferase M.PvuII of Proteus hauseri.